Reading from the N-terminus, the 489-residue chain is DNA-dependent metalloprotease SPRTN (489 aa).

At methionine 1 the chain carries N-acetylmethionine. The region spanning 45 to 212 is the SprT-like domain; the sequence is LQALFVQFND…KTCGGTYIKI (168 aa). Histidine 111 contacts Zn(2+). The active site involves glutamate 112. Zn(2+)-binding residues include histidine 115 and histidine 130. At lysine 230 the chain carries N6-acetyllysine. Positions 253-261 match the SHP-box motif; the sequence is FSGKGYVLG. Serine 268 bears the Phosphoserine mark. A Glycyl lysine isopeptide (Lys-Gly) (interchain with G-Cter in SUMO2) cross-link involves residue lysine 303. The short motif at 325–332 is the PIP-box element; sequence QNVLSNYF. Residue lysine 341 forms a Glycyl lysine isopeptide (Lys-Gly) (interchain with G-Cter in SUMO2); alternate linkage. Lysine 341 is covalently cross-linked (Glycyl lysine isopeptide (Lys-Gly) (interchain with G-Cter in ubiquitin); alternate). The interval 357 to 409 is disordered; that stretch reads GNIPKNSVSSSSQRRVSSSKISLRNSSKVTESASVMPSQDVSGSEDTFPNKRP. A Glycyl lysine isopeptide (Lys-Gly) (interchain with G-Cter in SUMO2) cross-link involves residue lysine 361. The segment covering 363 to 383 has biased composition (low complexity); that stretch reads SVSSSSQRRVSSSKISLRNSS. A phosphoserine; by CHEK1 mark is found at serine 373 and serine 374. A Glycyl lysine isopeptide (Lys-Gly) (interchain with G-Cter in SUMO2); alternate cross-link involves residue lysine 376. Residue lysine 376 forms a Glycyl lysine isopeptide (Lys-Gly) (interchain with G-Cter in ubiquitin); alternate linkage. The residue at position 383 (serine 383) is a Phosphoserine; by CHEK1. Polar residues predominate over residues 384–403; that stretch reads KVTESASVMPSQDVSGSEDT. The Nuclear localization signal motif lies at 402-413; that stretch reads DTFPNKRPRLED. Residue lysine 414 forms a Glycyl lysine isopeptide (Lys-Gly) (interchain with G-Cter in ubiquitin) linkage. Residues lysine 423 and lysine 424 each participate in a glycyl lysine isopeptide (Lys-Gly) (interchain with G-Cter in SUMO2) cross-link. The segment at 428-453 is disordered; it reads KSSGNDPKYSTTTAQNSSSSSSQSKM. Residue lysine 435 forms a Glycyl lysine isopeptide (Lys-Gly) (interchain with G-Cter in ubiquitin) linkage. Positions 437-451 are enriched in low complexity; it reads STTTAQNSSSSSSQS. The segment at 453–480 adopts a UBZ4-type zinc-finger fold; sequence MVNCPVCQNEVLESQINEHLDWCLEGDS. The Zn(2+) site is built by cysteine 456, cysteine 459, histidine 471, and cysteine 475. Lysine 484 participates in a covalent cross-link: Glycyl lysine isopeptide (Lys-Gly) (interchain with G-Cter in SUMO2).

It belongs to the Spartan family. As to quaternary structure, homodimer. Interacts (VIA PIP-box) with PCNA (when ubiquitinated). Interacts (via its SHP-box) with VCP/p97. Interacts with RAD18. Interacts with KCTD13 and POLD3. The cofactor is Zn(2+). Post-translationally, autocatalytically cleaved in response to double-stranded DNA-binding: autocatalytic cleavage takes place in trans and leads to inactivation. In terms of processing, monoubiquitinated; monoubiquitination promotes exclusion from chromatin. Deubiquitinated by VCPIP1: deubiquitination is required for subsequent acetylation and recruitment to chromatin and DNA damage sites. Acetylated following deubiquitination by VCPIP1, leading to recruitment to chromatin and DNA damage sites. Post-translationally, phosphorylation by CHEK1 promotes recruitment to chromatin.

Its subcellular location is the nucleus. It localises to the chromosome. Its activity is regulated as follows. DNA-binding activates the protease activity: single-stranded DNA-binding specifically activates ability to cleave covalent DNA-protein cross-links (DPCs). In contrast, double-stranded DNA-binding specifically activates autocatalytic cleavage, and subsequent inactivation. Its function is as follows. DNA-dependent metalloendopeptidase that mediates the proteolytic cleavage of covalent DNA-protein cross-links (DPCs) during DNA synthesis, thereby playing a key role in maintaining genomic integrity. DPCs are highly toxic DNA lesions that interfere with essential chromatin transactions, such as replication and transcription, and which are induced by reactive agents, such as UV light or formaldehyde. Associates with the DNA replication machinery and specifically removes DPCs during DNA synthesis. Catalyzes proteolytic cleavage of the HMCES DNA-protein cross-link following unfolding by the BRIP1/FANCJ helicase. Acts as a pleiotropic protease for DNA-binding proteins cross-linked with DNA, such as TOP1, TOP2A, histones H3 and H4. Mediates degradation of DPCs that are not ubiquitinated, while it is not able to degrade ubiquitinated DPCs. SPRTN activation requires polymerase collision with DPCs followed by helicase bypass of DPCs. Involved in recruitment of VCP/p97 to sites of DNA damage. Also acts as an activator of CHEK1 during normal DNA replication by mediating proteolytic cleavage of CHEK1, thereby promoting CHEK1 removal from chromatin and subsequent activation. Does not activate CHEK1 in response to DNA damage. May also act as a 'reader' of ubiquitinated PCNA: recruited to sites of UV damage and interacts with ubiquitinated PCNA and RAD18, the E3 ubiquitin ligase that monoubiquitinates PCNA. Facilitates chromatin association of RAD18 and is required for efficient PCNA monoubiquitination, promoting a feed-forward loop to enhance PCNA ubiquitination and translesion DNA synthesis. The chain is DNA-dependent metalloprotease SPRTN from Homo sapiens (Human).